We begin with the raw amino-acid sequence, 175 residues long: MIKLTAQQIFDKLLDEEKILSANGQIRFFLGDVDIIVKQKDVVGNIIQEWLGGWLRKREIEFDVSTNTQMPPDFFLNKKDRSRELLEVKAFNRNACPGFDIADFKMYSDESFISPISGCRLFNIGYDMDDNGNVTIKDLWLKKVWQITRSMDGWAINFKSKKAWCIKSARVFGTA.

It catalyses the reaction Endonucleolytic cleavage of DNA to give specific double-stranded fragments with terminal 5'-phosphates.. Its function is as follows. A P subtype restriction enzyme that recognizes the double-stranded sequence 5'-GGNNCC-3'; the cleavage site is unknown. This Neisseria gonorrhoeae protein is Type II restriction enzyme NgoBV (ngoBVR).